The following is a 927-amino-acid chain: F-box only protein 11 (927 aa).

Positions 1 to 132 are disordered; it reads MNSVRAANRR…STSTTENFGH (132 aa). A compositionally biased stretch (basic residues) spans 7–16; sequence ANRRPRRVSR. Residues 17 to 27 are compositionally biased toward low complexity; the sequence is PRPVQQQQQQP. The span at 28–68 shows a compositional bias: pro residues; sequence PQQPPPQPPQQQPPQQQPPPPPQQQQQQQPPPPPPPPPPLP. Over residues 114–129 the composition is skewed to polar residues; it reads PTKNSMEGASTSTTEN. An F-box domain is found at 153–199; the sequence is QYLQEKLPDEVVLKIFSYLLEQDLCRAACVCKRFSELANDPILWKRL. PbH1 repeat units lie at residues 395 to 417, 418 to 440, 441 to 463, 464 to 486, 487 to 509, 510 to 532, 533 to 555, 556 to 578, 579 to 601, 602 to 624, 625 to 647, 648 to 670, 671 to 693, 694 to 716, 717 to 739, 740 to 762, 763 to 785, 786 to 808, and 809 to 830; these read GACPTIKHCNISDCENVGLYITD, HAQGIYEDNEISNNALAGIWVKN, HGNPIIRRNHIHHGRDVGVFTFD, HGMGYFESCNIHRNRIAGFEVKA, YANPTVVRCEIHHGQTGGIYVHE, KGRGQFIENKIYANNFAGVWITS, NSDPTIRGNSIFNGNQGGVYIFG, DGRGLIEGNDIYGNALAGIQIRT, NSCPIVRHNKIHDGQHGGIYVHE, KGQGVIEENEVYSNTLAGVWVTT, GSTPVLRRNRIHSGKQVGVYFYD, NGHGVLEDNDIYNHMYSGVQIRT, GSNPKIRRNKIWGGQNGGILVYN, SGLGCIEDNEIFDNAMAGVWIKT, DSNPTLRRNKIHDGRDGGICIFN, GGRGLLEENDIFRNAQAGVLIST, NSHPILRKNRIFDGFAAGIEITN, HATATLEGNQIFNNRFGGLFLAS, and GVNVTMKDNKIMNNQDAIEKAV. A UBR-type zinc finger spans residues 833 to 904; it reads GQCLYKISSY…LSNPCTLAGE (72 aa).

Component of the SCF(FBXO11) complex consisting of CUL1, RBX1, SKP1 and FBXO11. Interacts with CIITA. In terms of tissue distribution, isoform 5 is expressed in keratinocytes, fibroblasts and melanocytes.

It localises to the nucleus. The protein resides in the chromosome. Its pathway is protein modification; protein ubiquitination. Substrate recognition component of a SCF (SKP1-CUL1-F-box protein) E3 ubiquitin-protein ligase complex which mediates the ubiquitination and subsequent proteasomal degradation of target proteins, such as DTL/CDT2, BCL6, SNAI1 and PRDM1/BLIMP1. The SCF(FBXO11) complex mediates ubiquitination and degradation of BCL6, thereby playing a role in the germinal center B-cells terminal differentiation toward memory B-cells and plasma cells. The SCF(FBXO11) complex also mediates ubiquitination and degradation of DTL, an important step for the regulation of TGF-beta signaling, cell migration and the timing of the cell-cycle progression and exit. The SCF(FBXO11) complex also catalyzes ubiquitination and degradation of GSK3B-phosphorylated SNAI1. Binds to and neddylates phosphorylated p53/TP53, inhibiting its transcriptional activity. Plays a role in the regulatiom of erythropoiesis but not myelopoiesis or megakaryopoiesis. Mechanistically, activates erythroid genes by mediating the degradation of BAHD1, a heterochromatin-associated protein that recruits corepressors to H3K27me3 marks. Participates in macrophage cell death and inflammation in response to bacterial toxins by regulating the expression of complement 5a receptor 1/C5AR1 and IL-1beta. Acts as a critical regulator to determine the level of MHC-II by mediating the recognition of degron at the P/S/T domain of CIITA leading to its ubiquitination and subsequent degradation via the proteasome. Participates in the antiviral repsonse by initiating the activation of TBK1-IRF3-IFN-I axis. Mediates the 'Lys-63'-linked ubiquitination of TRAF3 to strengthen the interaction between TRAF3 and TBK1. The protein is F-box only protein 11 of Homo sapiens (Human).